Reading from the N-terminus, the 338-residue chain is MIHKNWAELIKPTQLEIKPGADSSRVATVVAEPLERGFGLTLGNALRRVLLSSLQGAAITSVQIDNVLHEFSSVPGVREDVTDIVLNLKGVTLKMDVDAPKRLTLSAKGPGEVKAGDIQESAGITILNRDHVICHLDEGAELHMELAVANGKGYVAADKNRPEDAPIGLIPIDAIFSPVKRVSYEVTPTREGQVLDYDKLTMKVETDGSLTPEDAVAYAARIIQDQLSVFVNFDEPETATRSDAEDGLEFDPRLLKKVDELELSVRSANCLKNDNIVYIGDLIQKTEAEMLRTPNFGRKSLNEIKEVLSGMGLHLGMDVVDWPPENIEDLAKRFDDQF.

The interval methionine 1–aspartate 234 is alpha N-terminal domain (alpha-NTD). The segment at phenylalanine 250–phenylalanine 338 is alpha C-terminal domain (alpha-CTD).

This sequence belongs to the RNA polymerase alpha chain family. Homodimer. The RNAP catalytic core consists of 2 alpha, 1 beta, 1 beta' and 1 omega subunit. When a sigma factor is associated with the core the holoenzyme is formed, which can initiate transcription.

The enzyme catalyses RNA(n) + a ribonucleoside 5'-triphosphate = RNA(n+1) + diphosphate. Its function is as follows. DNA-dependent RNA polymerase catalyzes the transcription of DNA into RNA using the four ribonucleoside triphosphates as substrates. This is DNA-directed RNA polymerase subunit alpha from Paracoccus denitrificans (strain Pd 1222).